We begin with the raw amino-acid sequence, 317 residues long: tRNA dimethylallyltransferase (317 aa).

14-21 lines the ATP pocket; it reads GPTAVGKT. 16-21 contributes to the substrate binding site; it reads TAVGKT. The interval 39-42 is interaction with substrate tRNA; sequence DSMQ.

The protein belongs to the IPP transferase family. As to quaternary structure, monomer. Mg(2+) serves as cofactor.

The catalysed reaction is adenosine(37) in tRNA + dimethylallyl diphosphate = N(6)-dimethylallyladenosine(37) in tRNA + diphosphate. Functionally, catalyzes the transfer of a dimethylallyl group onto the adenine at position 37 in tRNAs that read codons beginning with uridine, leading to the formation of N6-(dimethylallyl)adenosine (i(6)A). The chain is tRNA dimethylallyltransferase from Bacillus cereus (strain ATCC 10987 / NRS 248).